Here is a 333-residue protein sequence, read N- to C-terminus: Adenosine deaminase (333 aa).

Zn(2+)-binding residues include H12 and H14. Residues H14, D16, and G170 each contribute to the substrate site. H197 contacts Zn(2+). E200 functions as the Proton donor in the catalytic mechanism. D278 is a Zn(2+) binding site. Substrate is bound at residue D279.

This sequence belongs to the metallo-dependent hydrolases superfamily. Adenosine and AMP deaminases family. Adenosine deaminase subfamily. The cofactor is Zn(2+).

The enzyme catalyses adenosine + H2O + H(+) = inosine + NH4(+). The catalysed reaction is 2'-deoxyadenosine + H2O + H(+) = 2'-deoxyinosine + NH4(+). In terms of biological role, catalyzes the hydrolytic deamination of adenosine and 2-deoxyadenosine. In Salmonella schwarzengrund (strain CVM19633), this protein is Adenosine deaminase.